The primary structure comprises 195 residues: Probable thymidylate kinase (195 aa).

7-14 (GIDGVGKT) provides a ligand contact to ATP.

The protein belongs to the thymidylate kinase family.

It catalyses the reaction dTMP + ATP = dTDP + ADP. The protein is Probable thymidylate kinase of Methanosphaera stadtmanae (strain ATCC 43021 / DSM 3091 / JCM 11832 / MCB-3).